We begin with the raw amino-acid sequence, 274 residues long: Basic leucine zipper transcriptional factor ATF-like 2 (274 aa).

3 disordered regions span residues 1–47 (MHLC…ALHQ), 128–151 (GSCYPAQPLSPGPQPHDSPSLLQC), and 187–229 (GSSS…PSSA). Residues 17–80 (EQQRQLKKQK…AWWSRTLHVH (64 aa)) form the bZIP domain. Residues 20-41 (RQLKKQKNRAAAQRSRQKHTDK) are basic motif. The segment covering 37–47 (KHTDKADALHQ) has biased composition (basic and acidic residues). The tract at residues 45–66 (LHQQHESLEKDNLALRKEIQSL) is leucine-zipper. Over residues 187–196 (GSSSKLSALQ) the composition is skewed to low complexity.

Belongs to the bZIP family. Heterodimer; heterodimerizes with JUN family proteins.

It localises to the nucleus. In terms of biological role, AP-1 family transcription factor that controls the differentiation of lineage-specific cells in the immune system. Following infection, participates in the differentiation of CD8(+) thymic conventional dendritic cells in the immune system. Acts via the formation of a heterodimer with JUN family proteins that recognizes and binds DNA sequence 5'-TGA[CG]TCA-3' and regulates expression of target genes. Selectively suppresses CCN1 transcription and hence blocks the downstream cell proliferation signals produced by CCN1 and inhibits CCN1-induced anchorage-independent growth and invasion in several cancer types, such as breast cancer, malignant glioma and metastatic melanoma. Possibly acts by interfering with AP-1 binding to CCN1 promoter. The chain is Basic leucine zipper transcriptional factor ATF-like 2 (BATF2) from Homo sapiens (Human).